Reading from the N-terminus, the 384-residue chain is Carbamoyl phosphate synthase small chain (384 aa).

The tract at residues 1 to 192 (MMKRIPAILV…LTDNIRVHRV (192 aa)) is CPSase. L-glutamine is bound by residues serine 51, glycine 244, and glycine 246. In terms of domain architecture, Glutamine amidotransferase type-1 spans 196-382 (KVIVIDFGVK…IEIMTKSKNK (187 aa)). Cysteine 272 serves as the catalytic Nucleophile. Residues methionine 273, glutamine 276, asparagine 312, glycine 314, and phenylalanine 315 each contribute to the L-glutamine site. Active-site residues include histidine 355 and glutamate 357.

Belongs to the CarA family. Composed of two chains; the small (or glutamine) chain promotes the hydrolysis of glutamine to ammonia, which is used by the large (or ammonia) chain to synthesize carbamoyl phosphate. Tetramer of heterodimers (alpha,beta)4.

Its subcellular location is the plastid. The protein resides in the chloroplast. The enzyme catalyses hydrogencarbonate + L-glutamine + 2 ATP + H2O = carbamoyl phosphate + L-glutamate + 2 ADP + phosphate + 2 H(+). The catalysed reaction is L-glutamine + H2O = L-glutamate + NH4(+). Its pathway is amino-acid biosynthesis; L-arginine biosynthesis; carbamoyl phosphate from bicarbonate: step 1/1. It participates in pyrimidine metabolism; UMP biosynthesis via de novo pathway; (S)-dihydroorotate from bicarbonate: step 1/3. Small subunit of the glutamine-dependent carbamoyl phosphate synthetase (CPSase). CPSase catalyzes the formation of carbamoyl phosphate from the ammonia moiety of glutamine, carbonate, and phosphate donated by ATP, constituting the first step of 2 biosynthetic pathways, one leading to arginine and/or urea and the other to pyrimidine nucleotides. The small subunit (glutamine amidotransferase) binds and cleaves glutamine to supply the large subunit with the substrate ammonia. This chain is Carbamoyl phosphate synthase small chain, found in Pyropia yezoensis (Susabi-nori).